Consider the following 150-residue polypeptide: Deoxyuridine 5'-triphosphate nucleotidohydrolase (150 aa).

Substrate contacts are provided by residues 68 to 70 (RSG), Asn-81, 85 to 87 (TID), and Lys-95.

It belongs to the dUTPase family. The cofactor is Mg(2+).

It carries out the reaction dUTP + H2O = dUMP + diphosphate + H(+). Its pathway is pyrimidine metabolism; dUMP biosynthesis; dUMP from dCTP (dUTP route): step 2/2. In terms of biological role, this enzyme is involved in nucleotide metabolism: it produces dUMP, the immediate precursor of thymidine nucleotides and it decreases the intracellular concentration of dUTP so that uracil cannot be incorporated into DNA. This is Deoxyuridine 5'-triphosphate nucleotidohydrolase from Rickettsia bellii (strain OSU 85-389).